We begin with the raw amino-acid sequence, 343 residues long: MSNYQFTKPAGPFYLAELAEISGSTLYEGKGEAFTVSGLAKLSEATTHNLVMLHQKKYLKELKNTAARACIIGPEYVKFAPDSMYLLVHPNPYKAFALIAQAFYPSEKPAGFIASSAAIETSAVIGSNCYIAHGVYIGNNAKIGSGCQIGVNTYIGDGVTIGDDCLIEDNVSIRHAVIGKHVVIYPGARIGQDGFGFASDASGHYKIPHAGGVIIGNHVEIGANTCIDRGSLDNTVIEDWCRLDNLVQVGHNVKIGKGSIIVAQVGIAGSTELGEYVTLAGQAGVIGHLKIGKGATVLASGKVYKNVKSGDRVGGHPAVSISDWQKQIRFLKTAIKPKKSPKS.

Histidine 251 acts as the Proton acceptor in catalysis.

The protein belongs to the transferase hexapeptide repeat family. LpxD subfamily. In terms of assembly, homotrimer.

The catalysed reaction is a UDP-3-O-[(3R)-3-hydroxyacyl]-alpha-D-glucosamine + a (3R)-hydroxyacyl-[ACP] = a UDP-2-N,3-O-bis[(3R)-3-hydroxyacyl]-alpha-D-glucosamine + holo-[ACP] + H(+). It functions in the pathway bacterial outer membrane biogenesis; LPS lipid A biosynthesis. Its function is as follows. Catalyzes the N-acylation of UDP-3-O-acylglucosamine using 3-hydroxyacyl-ACP as the acyl donor. Is involved in the biosynthesis of lipid A, a phosphorylated glycolipid that anchors the lipopolysaccharide to the outer membrane of the cell. In Legionella pneumophila (strain Lens), this protein is UDP-3-O-acylglucosamine N-acyltransferase 2.